The primary structure comprises 163 residues: Sorting nexin-3 (163 aa).

Positions 39-162 (VEVRDPRTHF…VRFLQDEVFN (124 aa)) constitute a PX domain. A 1,2-diacyl-sn-glycero-3-phospho-(1D-myo-inositol-3-phosphate)-binding residues include Arg82, Ser84, Lys113, Arg119, and Arg128.

Belongs to the sorting nexin family.

The protein localises to the cytoplasm. It localises to the golgi apparatus membrane. Its subcellular location is the prevacuolar compartment membrane. In terms of biological role, required for retention of late Golgi membrane proteins. Component of the retrieval machinery that functions by direct interaction with the cytosolic tails of certain TGN membrane proteins during the sorting/budding process at the prevacuolar compartment. Binds phosphatidylinositol 3-phosphate (PtdIns(P3)). The protein is Sorting nexin-3 (SNX3) of Eremothecium gossypii (strain ATCC 10895 / CBS 109.51 / FGSC 9923 / NRRL Y-1056) (Yeast).